We begin with the raw amino-acid sequence, 677 residues long: Regulator of G-protein signaling 9 (677 aa).

The 76-residue stretch at 30–105 (PETGVRMQNQ…PDSSLYRFQT (76 aa)) folds into the DEP domain. In terms of domain architecture, G protein gamma spans 219 to 280 (VTAVRKEIMY…ITDDTQFWDL (62 aa)). Positions 295-416 (RWAFNFSELI…SPIYKEMLAK (122 aa)) constitute an RGS domain. Disordered stretches follow at residues 530-571 (SSGL…RAPL) and 639-677 (DSGP…GKAG).

Heterodimer with GNB5. Interacts with RGS7BP, leading to regulate the subcellular location of the heterodimer formed with GNB5. Component of the RGS9-1-Gbeta5 complex composed of RGS9 (RGS9-1), Gbeta5 (GNB5) and RGS9BP. Interacts with PDE6G and GNAT1. As to expression, expressed in the central nervous system. Isoform RGS9L is found in striatum, hypothalamus and nucleus accumbens while isoform RGS9S is expressed in retina and pineal gland.

The protein resides in the membrane. In terms of biological role, inhibits signal transduction by increasing the GTPase activity of G protein alpha subunits thereby driving them into their inactive GDP-bound form. Binds to GNAT1. Involved in phototransduction; key element in the recovery phase of visual transduction. This is Regulator of G-protein signaling 9 (Rgs9) from Rattus norvegicus (Rat).